Here is a 213-residue protein sequence, read N- to C-terminus: Holliday junction branch migration complex subunit RuvA (213 aa).

Positions methionine 1–serine 69 are domain I. A domain II region spans residues serine 70–valine 148. The interval alanine 149 to leucine 158 is flexible linker. Positions leucine 158–histidine 213 are domain III.

It belongs to the RuvA family. Homotetramer. Forms an RuvA(8)-RuvB(12)-Holliday junction (HJ) complex. HJ DNA is sandwiched between 2 RuvA tetramers; dsDNA enters through RuvA and exits via RuvB. An RuvB hexamer assembles on each DNA strand where it exits the tetramer. Each RuvB hexamer is contacted by two RuvA subunits (via domain III) on 2 adjacent RuvB subunits; this complex drives branch migration. In the full resolvosome a probable DNA-RuvA(4)-RuvB(12)-RuvC(2) complex forms which resolves the HJ.

It is found in the cytoplasm. The RuvA-RuvB-RuvC complex processes Holliday junction (HJ) DNA during genetic recombination and DNA repair, while the RuvA-RuvB complex plays an important role in the rescue of blocked DNA replication forks via replication fork reversal (RFR). RuvA specifically binds to HJ cruciform DNA, conferring on it an open structure. The RuvB hexamer acts as an ATP-dependent pump, pulling dsDNA into and through the RuvAB complex. HJ branch migration allows RuvC to scan DNA until it finds its consensus sequence, where it cleaves and resolves the cruciform DNA. The protein is Holliday junction branch migration complex subunit RuvA of Nostoc sp. (strain PCC 7120 / SAG 25.82 / UTEX 2576).